Consider the following 76-residue polypeptide: Horsegram inhibitor 1 (76 aa).

7 cysteine pairs are disulfide-bonded: cysteine 16/cysteine 70, cysteine 17/cysteine 32, cysteine 20/cysteine 66, cysteine 22/cysteine 30, cysteine 40/cysteine 47, cysteine 44/cysteine 59, and cysteine 49/cysteine 57.

This sequence belongs to the Bowman-Birk serine protease inhibitor family. As to quaternary structure, HGI-III exists in a state of equilibrium between monomer, homodimer and trimer, with homodimer being the predominant form. The homodimer is stabilized by the non-covalent interaction between Lys-24 of one subunit and Asp-76 of the other subunit. The homodimer is more thermostable than the monomer. HGGI-I, HGGI-II and HGGI-III exist as monomers. HGGI-I, HGGI-II and HGGI-III are produced by proteolysis of the N- and C-termini of HGI-III.

Functionally, inhibitors of trypsin and chymotrypsin. HGGI-III has a higher activity than HGGI-I or HGGI-II. The protein is Horsegram inhibitor 1 of Vigna unguiculata subsp. cylindrica (Horse gram).